Reading from the N-terminus, the 220-residue chain is Large ribosomal subunit protein uL16 (220 aa).

It belongs to the universal ribosomal protein uL16 family. As to quaternary structure, component of the large ribosomal subunit. Mature ribosomes consist of a small (40S) and a large (60S) subunit. The 40S subunit contains about 32 different proteins and 1 molecule of RNA (18S). The 60S subunit contains 45 different proteins and 3 molecules of RNA (25S, 5.8S and 5S).

The protein localises to the cytoplasm. Component of the ribosome, a large ribonucleoprotein complex responsible for the synthesis of proteins in the cell. The small ribosomal subunit (SSU) binds messenger RNAs (mRNAs) and translates the encoded message by selecting cognate aminoacyl-transfer RNA (tRNA) molecules. The large subunit (LSU) contains the ribosomal catalytic site termed the peptidyl transferase center (PTC), which catalyzes the formation of peptide bonds, thereby polymerizing the amino acids delivered by tRNAs into a polypeptide chain. The nascent polypeptides leave the ribosome through a tunnel in the LSU and interact with protein factors that function in enzymatic processing, targeting, and the membrane insertion of nascent chains at the exit of the ribosomal tunnel. The chain is Large ribosomal subunit protein uL16 from Candida albicans (strain SC5314 / ATCC MYA-2876) (Yeast).